A 461-amino-acid chain; its full sequence is CBL-interacting protein kinase 1 (461 aa).

In terms of domain architecture, Protein kinase spans 19–274 (YEIGRTLGEG…IAGIKEHEWF (256 aa)). ATP contacts are provided by residues 25-33 (LGEGNFGKV) and Lys48. Catalysis depends on Asp142, which acts as the Proton acceptor. The interval 160-189 (DFGLSALPQHLGNDGLLHTTCGSPNYIAPE) is activation loop. The NAF domain maps to 308 to 332 (EKPTHINAFQLIGMASALDLSGFFE). The segment at 338-367 (QRKIRFTSTHSPKDLFDKIENVVTEMGFQV) is PPI.

It belongs to the protein kinase superfamily. CAMK Ser/Thr protein kinase family. SNF1 subfamily. Mn(2+) is required as a cofactor.

It carries out the reaction L-seryl-[protein] + ATP = O-phospho-L-seryl-[protein] + ADP + H(+). The catalysed reaction is L-threonyl-[protein] + ATP = O-phospho-L-threonyl-[protein] + ADP + H(+). CIPK serine-threonine protein kinases interact with CBL proteins. Binding of a CBL protein to the regulatory NAF domain of CIPK protein lead to the activation of the kinase in a calcium-dependent manner. This chain is CBL-interacting protein kinase 1 (CIPK1), found in Oryza sativa subsp. japonica (Rice).